Reading from the N-terminus, the 239-residue chain is Uridylate kinase (239 aa).

Lysine 13–glycine 16 is a binding site for ATP. Glycine 55 provides a ligand contact to UMP. The ATP site is built by glycine 56 and arginine 60. UMP contacts are provided by residues aspartate 75 and threonine 136 to threonine 143. Threonine 163, glutamine 164, tyrosine 169, and aspartate 172 together coordinate ATP.

This sequence belongs to the UMP kinase family. Homohexamer.

Its subcellular location is the cytoplasm. It catalyses the reaction UMP + ATP = UDP + ADP. It functions in the pathway pyrimidine metabolism; CTP biosynthesis via de novo pathway; UDP from UMP (UMPK route): step 1/1. Its activity is regulated as follows. Inhibited by UTP. In terms of biological role, catalyzes the reversible phosphorylation of UMP to UDP. This chain is Uridylate kinase, found in Bartonella bacilliformis (strain ATCC 35685 / KC583 / Herrer 020/F12,63).